The primary structure comprises 337 residues: MQISLKKYTLELKHTFSISRESHDFQDTLIAGLTLNGKTGYGEATSNPYYKITAESMIKEIEGIKNEIESFEFTTPESFHSFLEEKELSNFAICALDLAAHDLYGKLLGKPLYEIWGTNNDQYPTTNYTIGIAELDTMVAKMKEKPWPIYKIKLGTDNDVAIIRELRKHTTATFRIDANCAWSAEETIANAPQLKELGVEFLEQPLQADDWAGMEKVMHQCVLPVIADESCIVESDVEKCGLHFNGINIKLTKCGGLTPALRMIKKAKLMGLKVMVGCMTESSVGISAIAQLLPQLDYVDMDGAILLKRDIANGVRIGEDGSVVFPTLGGSGVTLNQ.

Substrate-binding positions include Thr129 and 151-153 (KIK). 3 residues coordinate Mg(2+): Asp177, Glu203, and Asp228. Substrate-binding positions include Lys250 and 300–302 (DMD).

This sequence belongs to the mandelate racemase/muconate lactonizing enzyme family. Mg(2+) serves as cofactor.

Its function is as follows. Broad specificity dipeptide epimerase. Catalyzes the epimerization of L-Ala-L-Ala, L-Ala-L-Glu, L-Ala-L-Ser, L-Ala-L-Thr and L-Ala-L-Met (in vitro). This Maribacter sp. (strain HTCC2170 / KCCM 42371) protein is L-Ala-D/L-amino acid epimerase.